The following is a 454-amino-acid chain: DNA repair protein RadA (454 aa).

The segment at Cys-11–Cys-28 adopts a C4-type zinc-finger fold. Position 94-101 (Gly-94–Ser-101) interacts with ATP. The RadA KNRFG motif signature appears at Lys-251–Gly-255. A lon-protease-like region spans residues Asp-350–Gln-454.

This sequence belongs to the RecA family. RadA subfamily.

In terms of biological role, DNA-dependent ATPase involved in processing of recombination intermediates, plays a role in repairing DNA breaks. Stimulates the branch migration of RecA-mediated strand transfer reactions, allowing the 3' invading strand to extend heteroduplex DNA faster. Binds ssDNA in the presence of ADP but not other nucleotides, has ATPase activity that is stimulated by ssDNA and various branched DNA structures, but inhibited by SSB. Does not have RecA's homology-searching function. This is DNA repair protein RadA from Chlamydia trachomatis serovar D (strain ATCC VR-885 / DSM 19411 / UW-3/Cx).